The chain runs to 146 residues: D-aminoacyl-tRNA deacylase (146 aa).

Positions 137–138 match the Gly-cisPro motif, important for rejection of L-amino acids motif; it reads GP.

This sequence belongs to the DTD family. Homodimer.

It is found in the cytoplasm. The enzyme catalyses glycyl-tRNA(Ala) + H2O = tRNA(Ala) + glycine + H(+). The catalysed reaction is a D-aminoacyl-tRNA + H2O = a tRNA + a D-alpha-amino acid + H(+). Functionally, an aminoacyl-tRNA editing enzyme that deacylates mischarged D-aminoacyl-tRNAs. Also deacylates mischarged glycyl-tRNA(Ala), protecting cells against glycine mischarging by AlaRS. Acts via tRNA-based rather than protein-based catalysis; rejects L-amino acids rather than detecting D-amino acids in the active site. By recycling D-aminoacyl-tRNA to D-amino acids and free tRNA molecules, this enzyme counteracts the toxicity associated with the formation of D-aminoacyl-tRNA entities in vivo and helps enforce protein L-homochirality. The chain is D-aminoacyl-tRNA deacylase from Bacillus thuringiensis (strain Al Hakam).